Here is a 216-residue protein sequence, read N- to C-terminus: Fucoxanthin-chlorophyll a-c binding protein C, chloroplastic (216 aa).

The N-terminal 38 residues, 1–38 (MKSAIMAVASAAPGLRGPSAFNGAALTTSAKSSSAMKM), are a transit peptide targeting the chloroplast. The next 3 membrane-spanning stretches (helical) occupy residues 80–100 (IAMLAIAGHLTQQNARLPGML), 121–141 (IPPGGLAQIFGFIGFLELAVM), and 182–202 (GRAAQMGILALMVHEELNNKP).

Belongs to the fucoxanthin chlorophyll protein family. In terms of assembly, the LHC complex of chromophytic algae is composed of fucoxanthin, chlorophyll A and C bound non-covalently by fucoxanthin chlorophyll proteins (FCPs). The ratio of pigments in this LHC is; fucoxanthin: chlorophyll C: chlorophyll A; (0.6-1): (0.1-0.3): (1).

It is found in the plastid. Its subcellular location is the chloroplast thylakoid membrane. In terms of biological role, the light-harvesting complex (LHC) functions as a light receptor, it captures and delivers excitation energy to photosystems with which it is closely associated. Energy is transferred from the carotenoid and chlorophyll C (or B) to chlorophyll A and the photosynthetic reaction centers where it is used to synthesize ATP and reducing power. This chain is Fucoxanthin-chlorophyll a-c binding protein C, chloroplastic (FCPC), found in Macrocystis pyrifera (Giant kelp).